Consider the following 326-residue polypeptide: ATP synthase gamma chain (326 aa).

It belongs to the ATPase gamma chain family. As to quaternary structure, F-type ATPases have 2 components, CF(1) - the catalytic core - and CF(0) - the membrane proton channel. CF(1) has five subunits: alpha(3), beta(3), gamma(1), delta(1), epsilon(1). CF(0) has three main subunits: a, b and c.

It localises to the cell membrane. Produces ATP from ADP in the presence of a proton gradient across the membrane. The gamma chain is believed to be important in regulating ATPase activity and the flow of protons through the CF(0) complex. The polypeptide is ATP synthase gamma chain (Rhodococcus opacus (strain B4)).